The sequence spans 687 residues: Acetolactate synthase catalytic subunit, mitochondrial (687 aa).

The transit peptide at 1–90 (MIRQSTLKNF…AEPDMDTSFV (90 aa)) directs the protein to the mitochondrion. Positions 43 to 52 (YYSASPLPAS) are enriched in low complexity. Residues 43–68 (YYSASPLPASKRPEPAPSFNVDPLEQ) form a disordered region. Glu-139 is a binding site for thiamine diphosphate. Residues Arg-241, 355–376 (HGCATANLAVQNADLIIAVGAR), and 407–426 (EVSPKNINKVVQTQIAVEGD) contribute to the FAD site. The segment at 499–579 (QHQMWAAQHW…VKILILNNEE (81 aa)) is thiamine pyrophosphate binding. Residues Asp-550, Asn-577, and Glu-579 each contribute to the Mg(2+) site.

The protein belongs to the TPP enzyme family. In terms of assembly, homodimer. The acetolactate synthase complex contains the catalytic subunit ILV2 and the regulatory small subunit ILV6. The cofactor is Mg(2+). Thiamine diphosphate is required as a cofactor.

Its subcellular location is the mitochondrion. The catalysed reaction is 2 pyruvate + H(+) = (2S)-2-acetolactate + CO2. It catalyses the reaction 2-oxobutanoate + pyruvate + H(+) = (S)-2-ethyl-2-hydroxy-3-oxobutanoate + CO2. It functions in the pathway amino-acid biosynthesis; L-isoleucine biosynthesis; L-isoleucine from 2-oxobutanoate: step 1/4. The protein operates within amino-acid biosynthesis; L-valine biosynthesis; L-valine from pyruvate: step 1/4. With respect to regulation, the regulatory subunit ILV6 stimulates enzymatic activity seven- to tenfold and confers sensitivity to inhibition by valine and activation by ATP. Catalytic subunit of mitochondrial acetolactate synthase, which catalyzes the first of a series of common steps in the biosynthesis of the branched-chain amino acids. Catalyzes the irreversible decarboxylation of pyruvate to a bound hydroxyethyl group that then condenses with either a second pyruvate molecule to form 2-acetolactate (AL) or with 2-ketobutyrate to form 2-aceto-2-hydroxybutyrate (AHB). The first product is the precursor for valine and leucine biosynthesis, while the second leads to isoleucine. This is Acetolactate synthase catalytic subunit, mitochondrial (ILV2) from Saccharomyces cerevisiae (strain ATCC 204508 / S288c) (Baker's yeast).